Reading from the N-terminus, the 327-residue chain is MLTLPFEDPVIMDTQFGANFPRDCVGDLKGNKQEPFEKEETLSHVMDDDDSEKDEDEREDGQDENGLPRRRGPRKKKMTKARVDRVKVRRMEANARERNRMHGLNNALDSLRKVVPCYSKTQKLSKIETLRLAKNYIWALSEILSTGKRPDLLTFVQTLCKGLSQPTTNLVAGCLQLNARNFIPDQISGEASFSGRSPYESVYSTYHSPSVVTPSGPSVDAVKPFRSFNYCSSYESFYESVSPECGSPQFEGPLSPPINFNGIFSLKHEEPVEYGKSCHYGTRYCAVPPRASIGQSARGSSDLHFPYDIHLRGQFYPVQDELNTFHN.

Positions 17–85 are disordered; it reads GANFPRDCVG…KKMTKARVDR (69 aa). The span at 24–46 shows a compositional bias: basic and acidic residues; it reads CVGDLKGNKQEPFEKEETLSHVM. Acidic residues predominate over residues 47 to 63; that stretch reads DDDDSEKDEDEREDGQD. The segment covering 68 to 80 has biased composition (basic residues); that stretch reads PRRRGPRKKKMTK. Positions 74-80 match the Nuclear localization signal motif; sequence RKKKMTK. The region spanning 88–140 is the bHLH domain; it reads VRRMEANARERNRMHGLNNALDSLRKVVPCYSKTQKLSKIETLRLAKNYIWAL.

Efficient DNA binding requires dimerization with another bHLH protein. Embryonic olfactory bulbs. In adult, expressed in brain, eye, intestine, muscle, ovary and skin.

Its subcellular location is the nucleus. Functionally, differentiation factor required for neurogenesis. Acts as an upstream activator of isl1. The chain is Neurogenic differentiation factor 6-A from Danio rerio (Zebrafish).